A 249-amino-acid polypeptide reads, in one-letter code: Zinc finger protein mnm-2 (249 aa).

The segment at 20–65 is disordered; the sequence is PKEELETEEEDEEEDEEEELSSSEVTSENDMETESASSSASSVGQP. Acidic residues predominate over residues 24-52; that stretch reads LETEEEDEEEDEEEELSSSEVTSENDMET. 3 consecutive C2H2-type zinc fingers follow at residues 168–190, 196–218, and 224–246; these read YRCDVCDKTFSRSNTLITHKRIH, FKCEHCGRAFRQPGNLTRHRLTH, and YVCGLCDKAFNRASNLHTHMRTH.

In larva and adult, expressed in the M3 pharyngeal motor neurons, extrapharyngeal neurons in the head, the PQR tail neurons, rectal cells, vulva cells, the spermetheca-uterine valve, body wall muscle cells and neurons of the ventral nerve cord. In the embryo, expressed in pharyngeal cells, extrapharyngeal head neurons and within the tail. Expressed in body wall muscle cells during late embryonic stages. Expressed in the mother cells of the M2 and M3 pharyngeal motor neurons precursor cells at the embryonic bean stage and subsequently in the M2 and M3 cells as they are born. Expression is sustained only in the two M3 cells up to at least the 5-day-old adult. In contrast, expression gradually declines in the M2 cells beginning from the time of their birth, and is completely undetectable by the time of hatching.

The protein resides in the nucleus. Functionally, required in the M3 pharyngeal motor neuron to guide the growth cone of the sister M2 motor neuron during axon development. The polypeptide is Zinc finger protein mnm-2 (Caenorhabditis elegans).